A 257-amino-acid chain; its full sequence is Alcohol dehydrogenase 1 (257 aa).

Residue 9–33 (VFVGGLGFIGYEACKTLITRDLASL) participates in NAD(+) binding. Ser137 contacts substrate. The active-site Proton acceptor is the Tyr150.

It belongs to the short-chain dehydrogenases/reductases (SDR) family. In terms of assembly, homodimer.

The enzyme catalyses a primary alcohol + NAD(+) = an aldehyde + NADH + H(+). It carries out the reaction a secondary alcohol + NAD(+) = a ketone + NADH + H(+). This Ceratitis cosyra (Mango fruit fly) protein is Alcohol dehydrogenase 1 (ADH1).